Here is a 304-residue protein sequence, read N- to C-terminus: Probable porphobilinogen deaminase (304 aa).

Cys240 is modified (S-(dipyrrolylmethanemethyl)cysteine).

It belongs to the HMBS family. The cofactor is dipyrromethane.

It carries out the reaction 4 porphobilinogen + H2O = hydroxymethylbilane + 4 NH4(+). The protein operates within porphyrin-containing compound metabolism; protoporphyrin-IX biosynthesis; coproporphyrinogen-III from 5-aminolevulinate: step 2/4. Functionally, tetrapolymerization of the monopyrrole PBG into the hydroxymethylbilane pre-uroporphyrinogen in several discrete steps. This is Probable porphobilinogen deaminase from Ignicoccus hospitalis (strain KIN4/I / DSM 18386 / JCM 14125).